Here is a 110-residue protein sequence, read N- to C-terminus: UPF0145 protein (110 aa).

It belongs to the UPF0145 family.

The protein is UPF0145 protein of Listeria ivanovii.